The primary structure comprises 505 residues: Glutamyl-tRNA(Gln) amidotransferase subunit B, mitochondrial (505 aa).

The protein belongs to the GatB/GatE family. GatB subfamily. In terms of assembly, subunit of the heterotrimeric GatCAB amidotransferase (AdT) complex, composed of A, B and C subunits.

The protein localises to the mitochondrion. The enzyme catalyses L-glutamyl-tRNA(Gln) + L-glutamine + ATP + H2O = L-glutaminyl-tRNA(Gln) + L-glutamate + ADP + phosphate + H(+). Its function is as follows. Allows the formation of correctly charged Gln-tRNA(Gln) through the transamidation of misacylated Glu-tRNA(Gln) in the mitochondria. The reaction takes place in the presence of glutamine and ATP through an activated gamma-phospho-Glu-tRNA(Gln). The sequence is that of Glutamyl-tRNA(Gln) amidotransferase subunit B, mitochondrial from Schizosaccharomyces japonicus (strain yFS275 / FY16936) (Fission yeast).